The primary structure comprises 161 residues: Regulator of ribonuclease activity A (161 aa).

It belongs to the RraA family. As to quaternary structure, homotrimer. Binds to both RNA-binding sites in the C-terminal region of Rne and to RhlB.

The protein localises to the cytoplasm. In terms of biological role, globally modulates RNA abundance by binding to RNase E (Rne) and regulating its endonucleolytic activity. Can modulate Rne action in a substrate-dependent manner by altering the composition of the degradosome. Modulates RNA-binding and helicase activities of the degradosome. This chain is Regulator of ribonuclease activity A, found in Photobacterium profundum (strain SS9).